The primary structure comprises 321 residues: Cilia- and flagella-associated protein 161 (321 aa).

The disordered stretch occupies residues leucine 275–methionine 321. Residues proline 285 to valine 299 are compositionally biased toward basic and acidic residues.

In terms of assembly, microtubule inner protein component of sperm flagellar doublet microtubules. Expressed in trachea multiciliated cells.

The protein localises to the cytoplasm. It localises to the cytoskeleton. It is found in the cilium axoneme. The protein resides in the flagellum axoneme. Microtubule inner protein (MIP) part of the dynein-decorated doublet microtubules (DMTs) in cilia axoneme, which is required for motile cilia beating. The polypeptide is Cilia- and flagella-associated protein 161 (Bos taurus (Bovine)).